The following is a 442-amino-acid chain: UDP-glucosyltransferase 29 (442 aa).

His-20 serves as the catalytic Proton acceptor. His-20 is an an anthocyanidin binding site. Residue Asp-116 is the Charge relay of the active site. UDP-alpha-D-glucose contacts are provided by Thr-138, Ala-318, Gln-320, His-335, Trp-338, Ser-340, Glu-343, Asp-359, and Gln-360.

This sequence belongs to the UDP-glycosyltransferase family. In terms of tissue distribution, expressed at higher levels in roots than in leaves.

It carries out the reaction (20S)-ginsenoside F2 + UDP-alpha-D-glucose = (20S)-ginsenoside Rd + UDP + H(+). The catalysed reaction is (20S)-ginsenoside Rh2 + UDP-alpha-D-glucose = (20S)-ginsenoside Rg3 + UDP + H(+). Its pathway is secondary metabolite biosynthesis; terpenoid biosynthesis. Its function is as follows. Component of the dammarane-type triterpene saponins (e.g. PPD-type ginsenosides or panaxosides) biosynthetic pathway. Glycosyltransferase that catalyzes the conversion of ginsenoside Rh2 to ginsenoside Rg3. Triggers the biosynthesis of ginsenoside Rd from ginsenoside F2. This Panax ginseng (Korean ginseng) protein is UDP-glucosyltransferase 29.